We begin with the raw amino-acid sequence, 816 residues long: Phosphatidylinositol 4-kinase beta (816 aa).

A disordered region spans residues 1 to 30 (MGDTVVEPTPLKPTSESTPGPAGSNGGSLL). Residue G2 is modified to N-acetylglycine. The interval 2–68 (GDTVVEPTPL…VKLLHGGVAI (67 aa)) is interaction with ACBD3. Positions 52-242 (CQEVLEKVKL…GTKLRKLILS (191 aa)) constitute a PIK helical domain. The interval 248–318 (AHRKRELPSL…TESIDNSFSS (71 aa)) is disordered. Phosphoserine is present on S258. A Phosphothreonine modification is found at T263. A phosphoserine mark is found at S266, S275, S277, S284, and S294. Composition is skewed to polar residues over residues 278–297 (DATA…SNPK) and 306–318 (SSST…SFSS). Phosphoserine is present on S428. T438 carries the phosphothreonine modification. A Phosphoserine modification is found at S511. 2 positions are modified to phosphothreonine: T517 and T519. Residues 535 to 801 (EPWQEKVRRI…MVDGSMRSIT (267 aa)) form the PI3K/PI4K catalytic domain. A G-loop region spans residues 541-547 (VRRIREG). The catalytic loop stretch occupies residues 668-676 (QVKDRHNGN). The tract at residues 687–711 (HIDFGFILSSSPRNLGFETSAFKLT) is activation loop.

It belongs to the PI3/PI4-kinase family. Type III PI4K subfamily. Interacts with ARF1 and ARF3 in the Golgi complex, but not with ARF4, ARF5 or ARF6. Interacts with NCS1/FREQ in a calcium-independent manner. Interacts with CALN1/CABP8 and CALN2/CABP7; in a calcium-dependent manner; this interaction competes with NCS1/FREQ binding. Interacts with ACBD3. Interacts with ARMH3, YWHAB, YWHAE, YWHAG, YWHAH, YWHAQ, YWHAZ and SFN. Interacts with GGA2 (via VHS domain); the interaction is important for PI4KB location at the Golgi apparatus membrane. Interacts with ATG9A. Mg(2+) is required as a cofactor. Requires Mn(2+) as cofactor.

It localises to the endomembrane system. The protein resides in the mitochondrion outer membrane. Its subcellular location is the rough endoplasmic reticulum membrane. The protein localises to the golgi apparatus. It is found in the golgi apparatus membrane. It carries out the reaction a 1,2-diacyl-sn-glycero-3-phospho-(1D-myo-inositol) + ATP = a 1,2-diacyl-sn-glycero-3-phospho-(1D-myo-inositol 4-phosphate) + ADP + H(+). Inhibited by wortmannin. Increased kinase activity upon interaction with NCS1/FREQ. Its function is as follows. Phosphorylates phosphatidylinositol (PI) in the first committed step in the production of the second messenger inositol-1,4,5,-trisphosphate (PIP). May regulate Golgi disintegration/reorganization during mitosis, possibly via its phosphorylation. Involved in Golgi-to-plasma membrane trafficking. May play an important role in the inner ear development. This Otolemur garnettii (Small-eared galago) protein is Phosphatidylinositol 4-kinase beta (PI4KB).